The primary structure comprises 158 residues: NADH-quinone oxidoreductase subunit B 2 (158 aa).

Positions 37, 38, 102, and 132 each coordinate [4Fe-4S] cluster.

Belongs to the complex I 20 kDa subunit family. As to quaternary structure, NDH-1 is composed of 14 different subunits. Subunits NuoB, C, D, E, F, and G constitute the peripheral sector of the complex. [4Fe-4S] cluster is required as a cofactor.

It is found in the cell inner membrane. The catalysed reaction is a quinone + NADH + 5 H(+)(in) = a quinol + NAD(+) + 4 H(+)(out). Functionally, NDH-1 shuttles electrons from NADH, via FMN and iron-sulfur (Fe-S) centers, to quinones in the respiratory chain. Couples the redox reaction to proton translocation (for every two electrons transferred, four hydrogen ions are translocated across the cytoplasmic membrane), and thus conserves the redox energy in a proton gradient. The chain is NADH-quinone oxidoreductase subunit B 2 from Acidithiobacillus ferrooxidans (strain ATCC 53993 / BNL-5-31) (Leptospirillum ferrooxidans (ATCC 53993)).